The sequence spans 233 residues: Glucosamine-6-phosphate deaminase (233 aa).

D62 functions as the Proton acceptor; for enolization step in the catalytic mechanism. The active-site For ring-opening step is N128. The active-site Proton acceptor; for ring-opening step is the H130. E135 acts as the For ring-opening step in catalysis.

Belongs to the glucosamine/galactosamine-6-phosphate isomerase family. NagB subfamily.

The catalysed reaction is alpha-D-glucosamine 6-phosphate + H2O = beta-D-fructose 6-phosphate + NH4(+). The protein operates within amino-sugar metabolism; N-acetylneuraminate degradation; D-fructose 6-phosphate from N-acetylneuraminate: step 5/5. Functionally, catalyzes the reversible isomerization-deamination of glucosamine 6-phosphate (GlcN6P) to form fructose 6-phosphate (Fru6P) and ammonium ion. This Leuconostoc citreum (strain KM20) protein is Glucosamine-6-phosphate deaminase.